A 90-amino-acid chain; its full sequence is Conotoxin ba9a (90 aa).

An N-terminal signal peptide occupies residues 1–27; the sequence is MHLSLARSAGLMWLLLFAVGNFVGVQP. Positions 28–62 are excised as a propeptide; sequence GQITRDVDNGQLADNRRNLQSLRKPMTLFKSLNKR. 4-carboxyglutamate is present on Glu-67. 2 positions are modified to 4-hydroxyproline: Pro-76 and Pro-80.

Expressed by the venom duct.

The protein localises to the secreted. This Conus bayani (Bayan's cone) protein is Conotoxin ba9a.